A 242-amino-acid polypeptide reads, in one-letter code: Methylthioribulose-1-phosphate dehydratase (242 aa).

Residue C97 participates in substrate binding. Positions 115 and 117 each coordinate Zn(2+). E139 (proton donor/acceptor) is an active-site residue. H195 contacts Zn(2+).

It belongs to the aldolase class II family. MtnB subfamily. In terms of assembly, homotetramer. Interacts with APAF1. May interact with CASP1. Zn(2+) serves as cofactor.

The protein resides in the cytoplasm. The catalysed reaction is 5-(methylsulfanyl)-D-ribulose 1-phosphate = 5-methylsulfanyl-2,3-dioxopentyl phosphate + H2O. It functions in the pathway amino-acid biosynthesis; L-methionine biosynthesis via salvage pathway; L-methionine from S-methyl-5-thio-alpha-D-ribose 1-phosphate: step 2/6. Functionally, catalyzes the dehydration of methylthioribulose-1-phosphate (MTRu-1-P) into 2,3-diketo-5-methylthiopentyl-1-phosphate (DK-MTP-1-P). Functions in the methionine salvage pathway, which plays a key role in cancer, apoptosis, microbial proliferation and inflammation. May inhibit the CASP1-related inflammatory response (pyroptosis), the CASP9-dependent apoptotic pathway and the cytochrome c-dependent and APAF1-mediated cell death. The polypeptide is Methylthioribulose-1-phosphate dehydratase (Bos taurus (Bovine)).